Reading from the N-terminus, the 111-residue chain is Magnetosome protein MamF (111 aa).

Over 1–17 the chain is Cytoplasmic; it reads MAETILIETKTAGGNCR. A helical transmembrane segment spans residues 18–38; the sequence is SYLMAGASYLGILCFVPLLMS. The Lumenal segment spans residues 39 to 50; that stretch reads RDDEYVYFHAKQ. Residues 51–71 traverse the membrane as a helical segment; the sequence is GLVLWMWSILAMFALHLPGIG. Residue Lys-72 is a topological domain, cytoplasmic. A helical membrane pass occupies residues 73–93; that stretch reads WLFGFSSMGVLMLSVVGLVSV. The Lumenal portion of the chain corresponds to 94 to 111; that stretch reads ALRRTWRLPLISHVVALI.

It belongs to the magnetosome MamF/MmsF protein family. In terms of assembly, may form homooligomers. Subject to cleavage or degradation; identified by N-terminal sequencing of proteins that are about 103, 92 and 15 kDa in size.

The protein resides in the magnetosome membrane. In terms of biological role, plays a role in regulating magnetite crystal size; partially redundant function with MmsF. In Magnetospirillum gryphiswaldense (strain DSM 6361 / JCM 21280 / NBRC 15271 / MSR-1), this protein is Magnetosome protein MamF.